Reading from the N-terminus, the 180-residue chain is uncharacterized protein (180 aa).

Belongs to the isochorismatase family.

This is an uncharacterized protein from Bacillus subtilis (strain 168).